The primary structure comprises 208 residues: RNA-binding protein KhpB (208 aa).

Residues 5-55 (TAAGRNVDEAVQSGLQELGLTKDKVEITVIEEGNKGFLGIFGKKPAIVKLV) form a jag_N domain region. Residues 58-135 (IDPIQQAKLY…GQYKNVTVDA (78 aa)) form the KH domain. Residues 140-208 (LKRKETLSQL…NRHLVISHKR (69 aa)) enclose the R3H domain.

Belongs to the KhpB RNA-binding protein family. In terms of assembly, forms a complex with KhpA.

The protein localises to the cytoplasm. In terms of biological role, a probable RNA chaperone. Forms a complex with KhpA which binds to cellular RNA and controls its expression. Plays a role in peptidoglycan (PG) homeostasis and cell length regulation. The chain is RNA-binding protein KhpB from Bacillus subtilis (strain 168).